The chain runs to 356 residues: 3-dehydroquinate synthase (356 aa).

NAD(+) is bound by residues 106–110 (GVVGD), 130–131 (TS), Lys143, Lys152, and 170–173 (FLKT). Zn(2+) is bound by residues Glu185, His246, and His263.

This sequence belongs to the sugar phosphate cyclases superfamily. Dehydroquinate synthase family. The cofactor is NAD(+). It depends on Co(2+) as a cofactor. Requires Zn(2+) as cofactor.

The protein localises to the cytoplasm. The enzyme catalyses 7-phospho-2-dehydro-3-deoxy-D-arabino-heptonate = 3-dehydroquinate + phosphate. The protein operates within metabolic intermediate biosynthesis; chorismate biosynthesis; chorismate from D-erythrose 4-phosphate and phosphoenolpyruvate: step 2/7. Functionally, catalyzes the conversion of 3-deoxy-D-arabino-heptulosonate 7-phosphate (DAHP) to dehydroquinate (DHQ). The sequence is that of 3-dehydroquinate synthase from Clostridium acetobutylicum (strain ATCC 824 / DSM 792 / JCM 1419 / IAM 19013 / LMG 5710 / NBRC 13948 / NRRL B-527 / VKM B-1787 / 2291 / W).